The sequence spans 94 residues: Large ribosomal subunit protein bL25 (94 aa).

This sequence belongs to the bacterial ribosomal protein bL25 family. Part of the 50S ribosomal subunit; part of the 5S rRNA/L5/L18/L25 subcomplex. Contacts the 5S rRNA. Binds to the 5S rRNA independently of L5 and L18.

This is one of the proteins that binds to the 5S RNA in the ribosome where it forms part of the central protuberance. This chain is Large ribosomal subunit protein bL25, found in Pectobacterium atrosepticum (strain SCRI 1043 / ATCC BAA-672) (Erwinia carotovora subsp. atroseptica).